The following is a 1183-amino-acid chain: Collagen adhesin (1183 aa).

An N-terminal signal peptide occupies residues 1–29; the sequence is MNKNVLKFMVFIMLLNIITPLFNKNEAFA. Residues 151–318 form a collagen-binding region; it reads ITSGNKSTNV…GKSFNHTVHN (168 aa). 7 consecutive cross-links (isoaspartyl lysine isopeptide (Lys-Asn)) follow at residues 176–293, 541–618, 631–715, 728–805, 818–902, 915–992, and 1005–1089; these read KTGD…EFVN, KVWD…TITN, and KNWD…IVTN. The B1 repeat unit spans residues 533–719; it reads ETTSISGEKV…NLIVTNKYTP (187 aa). The tract at residues 533–1093 is 3 X 187 AA approximate tandem repeats; the sequence is ETTSISGEKV…NLIVTNKYTP (561 aa). The stretch at 720 to 906 is one B2 repeat; sequence ETTSISGEKV…NLIVTNKYTP (187 aa). One copy of the B3 repeat lies at 907-1093; it reads ETTSISGEKV…NLIVTNKYTP (187 aa). A disordered region spans residues 1074–1150; sequence TTHVDNNDMG…KTKPENPLKE (77 aa). Composition is skewed to basic and acidic residues over residues 1101 to 1118 and 1127 to 1150; these read YPEK…DHSN and KPSK…PLKE. The LPXTG sorting signal motif lies at 1151–1155; that stretch reads LPKTG. Thr1154 carries the pentaglycyl murein peptidoglycan amidated threonine modification. The propeptide at 1155 to 1183 is removed by sortase; it reads GMKIITSWITWVFIGILGLYLILRKRFNS.

Interacts (via N-terminus) with type I collagen. Interacts with host C1QA.

It is found in the secreted. It localises to the cell wall. Collagen-binding adhesin that mediates bacterial adherence to collagenous tissues such as cartilage. Participates in the infectious process by acting as a virulence factor in many different animal models of staphylococcal infections including arthritis, endocarditis and keratitis. Inhibits the activation of the classical complement pathway by interacting with host C1q and interfering with the association between host C1r with C1q. This Staphylococcus aureus protein is Collagen adhesin (cna).